The following is a 156-amino-acid chain: Small ribosomal subunit protein uS7 (156 aa).

It belongs to the universal ribosomal protein uS7 family. In terms of assembly, part of the 30S ribosomal subunit. Contacts proteins S9 and S11.

In terms of biological role, one of the primary rRNA binding proteins, it binds directly to 16S rRNA where it nucleates assembly of the head domain of the 30S subunit. Is located at the subunit interface close to the decoding center, probably blocks exit of the E-site tRNA. The polypeptide is Small ribosomal subunit protein uS7 (Symbiobacterium thermophilum (strain DSM 24528 / JCM 14929 / IAM 14863 / T)).